A 156-amino-acid polypeptide reads, in one-letter code: ATP synthase subunit b (156 aa).

A helical transmembrane segment spans residues A11–A31.

Belongs to the ATPase B chain family. F-type ATPases have 2 components, F(1) - the catalytic core - and F(0) - the membrane proton channel. F(1) has five subunits: alpha(3), beta(3), gamma(1), delta(1), epsilon(1). F(0) has three main subunits: a(1), b(2) and c(10-14). The alpha and beta chains form an alternating ring which encloses part of the gamma chain. F(1) is attached to F(0) by a central stalk formed by the gamma and epsilon chains, while a peripheral stalk is formed by the delta and b chains.

It localises to the cell inner membrane. Functionally, f(1)F(0) ATP synthase produces ATP from ADP in the presence of a proton or sodium gradient. F-type ATPases consist of two structural domains, F(1) containing the extramembraneous catalytic core and F(0) containing the membrane proton channel, linked together by a central stalk and a peripheral stalk. During catalysis, ATP synthesis in the catalytic domain of F(1) is coupled via a rotary mechanism of the central stalk subunits to proton translocation. In terms of biological role, component of the F(0) channel, it forms part of the peripheral stalk, linking F(1) to F(0). In Erwinia tasmaniensis (strain DSM 17950 / CFBP 7177 / CIP 109463 / NCPPB 4357 / Et1/99), this protein is ATP synthase subunit b.